The sequence spans 856 residues: Subtilisin-like protease SBT2.2 (856 aa).

The first 21 residues, 1–21 (MRRVLMVNFGVLLLFCFGVLS), serve as a signal peptide directing secretion. Residues 22–159 (NSFGQDNGGD…IVLDFSVRTA (138 aa)) constitute a propeptide, activation peptide. Residues Asn-35 and Asn-85 are each glycosylated (N-linked (GlcNAc...) asparagine). The region spanning 40-159 (VYIVTLRQAS…IVLDFSVRTA (120 aa)) is the Inhibitor I9 domain. A Peptidase S8 domain is found at 164–709 (PQFMGLPKGA…NGFVNATAAL (546 aa)). Catalysis depends on Asp-193, which acts as the Charge relay system. N-linked (GlcNAc...) asparagine glycosylation is found at Asn-204 and Asn-255. The Charge relay system role is filled by His-269. N-linked (GlcNAc...) asparagine glycosylation is found at Asn-412, Asn-441, Asn-495, Asn-540, and Asn-568. Residues 432–528 (MISALDALKN…MDMPGIIIPS (97 aa)) form the PA domain. The active-site Charge relay system is Ser-634. N-linked (GlcNAc...) asparagine glycans are attached at residues Asn-704, Asn-730, Asn-738, Asn-748, Asn-767, Asn-782, and Asn-823.

This sequence belongs to the peptidase S8 family.

It is found in the secreted. The polypeptide is Subtilisin-like protease SBT2.2 (Arabidopsis thaliana (Mouse-ear cress)).